The sequence spans 303 residues: Archaeosortase A (303 aa).

Transmembrane regions (helical) follow at residues 3 to 23, 36 to 56, 60 to 80, 93 to 113, 169 to 189, 200 to 220, and 259 to 279; these read GLLS…GAVA, TAAW…FTLV, YIEG…GWLL, AVAA…FTLL, VVLA…IAAV, LAIA…FIAI, and LAVV…PELL. Cys-173 acts as the Acyl-thioester intermediate in catalysis. The active-site Proton donor is the Arg-214.

It belongs to the exosortase/archaeosortase family. Archaeosortase A subfamily.

The protein localises to the cell membrane. In terms of biological role, transpeptidase that recognizes and modifies its substrate by proteolytic cleavage of a sorting signal. Following cleavage, a covalent intermediate is formed via a thioester bond between the archaeosortase and its substrate, which is then transferred and covalently attached to the cell membrane. This sortase recognizes a tripartite structure consisting of a conserved Pro-Gly-Phe (PGF) motif, followed by a transmembrane alpha helix domain and a cluster of basic residues, usually at the C-terminus of target proteins. Confirmed substrates include the cell surface S-layer glycoprotein Csg and HVO_0405. ArtA is required for the C-terminal processing of Csg and for its lipidation and attachment to the archaeal plasma membrane. It is also required for the processing of HVO_0405, which contains an atypical central tripartite structure. The protein is Archaeosortase A of Haloferax volcanii (strain ATCC 29605 / DSM 3757 / JCM 8879 / NBRC 14742 / NCIMB 2012 / VKM B-1768 / DS2) (Halobacterium volcanii).